Reading from the N-terminus, the 344-residue chain is Serine proteinase inhibitor 2 (344 aa).

It belongs to the serpin family. Poxviruses subfamily.

Its subcellular location is the host cytoplasm. Functionally, viral serpin that inhibits both cysteine and serine proteinases involved in the regulation of host inflammatory and apoptosis processes. Major anti-apoptotic protein which inhibits both intrinsic and extrinsic pathways and strongly cleaves host CASP1 and CASP8 but is a rather poor inhibitor of host CASP3. Prevents the proteolytic activity of host interleukin-1-beta converting enzyme (ICE) and ICE-like enzymes. Can also block apoptosis through host tumor necrosis factor (TNF) receptor. The inhibition of host ICE is an example of a 'cross-class' interaction, in which a serpin inhibits a non-serine proteinase. Also inhibits granzyme B. This chain is Serine proteinase inhibitor 2 (OPG199), found in Homo sapiens (Human).